Reading from the N-terminus, the 521-residue chain is Ankyrin repeat and death domain-containing protein 1B (521 aa).

ANK repeat units lie at residues 60–89 (AIER…NINA), 93–122 (MNRT…RVDV), 126–155 (HGLT…DQRA), 159–190 (EGMN…DLNQ), 194–223 (RGRK…HTSE), 227–256 (DGNT…EVNE), 260–289 (LNVS…DLQQ), 293–322 (SKEP…DVDV), 326–355 (RRQT…NLKI), and 359–388 (QGKT…YYAW). The 89-residue stretch at 420–508 (TLLWNLAYRQ…ELAEKIRQFK (89 aa)) folds into the Death domain.

This is Ankyrin repeat and death domain-containing protein 1B (Ankdd1b) from Mus musculus (Mouse).